The sequence spans 324 residues: tRNA uridine(34) hydroxylase (324 aa).

In terms of domain architecture, Rhodanese spans 145–239; it reads NDKKTIFIDM…YVHDARKNGL (95 aa). Cysteine 199 (cysteine persulfide intermediate) is an active-site residue.

Belongs to the TrhO family.

It catalyses the reaction uridine(34) in tRNA + AH2 + O2 = 5-hydroxyuridine(34) in tRNA + A + H2O. Catalyzes oxygen-dependent 5-hydroxyuridine (ho5U) modification at position 34 in tRNAs. This chain is tRNA uridine(34) hydroxylase, found in Buchnera aphidicola subsp. Acyrthosiphon pisum (strain Tuc7).